We begin with the raw amino-acid sequence, 216 residues long: Outer-membrane lipoprotein LolB (216 aa).

An N-terminal signal peptide occupies residues 1-21; the sequence is MLIFKICFYRLLPLSVLLLAA. Cysteine 22 carries N-palmitoyl cysteine lipidation. Cysteine 22 is lipidated: S-diacylglycerol cysteine.

The protein belongs to the LolB family. As to quaternary structure, monomer.

It is found in the cell outer membrane. In terms of biological role, plays a critical role in the incorporation of lipoproteins in the outer membrane after they are released by the LolA protein. The sequence is that of Outer-membrane lipoprotein LolB from Hamiltonella defensa subsp. Acyrthosiphon pisum (strain 5AT).